A 313-amino-acid chain; its full sequence is MVSYASDVKKELTSLPVHPEHAKAELAAFLRMNGVLSLHDHQFSLDITTENPAIARRIFSLIKTAYGIEPLLIVSKKMKLKKNYQYLVRLQKQVHEILSDLEIFDSDNGLITGIPEKIMTSEQRAMSYLRGAFLAAGSVNNPETSRYHLEIYSLYENHNNDLLKLMNSFFYLNAKATKRRNGYIVYLKEAEKIGDFLHIVGAVNAMLAFEDLRIMRDMRNSVNRLVNCDTANLKKTANAAAKQVEDIQLIEKKVGLENLPEKLAILAHFRLTHPELSLKEVAAQVPDGPISKSGVNHRFQKIREMAQQLKEEN.

The segment at residues 277–311 (SLKEVAAQVPDGPISKSGVNHRFQKIREMAQQLKE) is a DNA-binding region (H-T-H motif).

It belongs to the WhiA family.

Its function is as follows. Involved in cell division and chromosome segregation. This is Probable cell division protein WhiA from Lactobacillus gasseri (strain ATCC 33323 / DSM 20243 / BCRC 14619 / CIP 102991 / JCM 1131 / KCTC 3163 / NCIMB 11718 / NCTC 13722 / AM63).